A 396-amino-acid chain; its full sequence is Tryptophan synthase beta chain (396 aa).

N6-(pyridoxal phosphate)lysine is present on K88.

This sequence belongs to the TrpB family. Tetramer of two alpha and two beta chains. Pyridoxal 5'-phosphate serves as cofactor.

It catalyses the reaction (1S,2R)-1-C-(indol-3-yl)glycerol 3-phosphate + L-serine = D-glyceraldehyde 3-phosphate + L-tryptophan + H2O. The protein operates within amino-acid biosynthesis; L-tryptophan biosynthesis; L-tryptophan from chorismate: step 5/5. In terms of biological role, the beta subunit is responsible for the synthesis of L-tryptophan from indole and L-serine. The sequence is that of Tryptophan synthase beta chain from Shewanella sp. (strain MR-7).